We begin with the raw amino-acid sequence, 122 residues long: Small ribosomal subunit protein uS12 (122 aa).

Residue aspartate 89 is modified to 3-methylthioaspartic acid.

It belongs to the universal ribosomal protein uS12 family. As to quaternary structure, part of the 30S ribosomal subunit. Contacts proteins S8 and S17. May interact with IF1 in the 30S initiation complex.

Its function is as follows. With S4 and S5 plays an important role in translational accuracy. Functionally, interacts with and stabilizes bases of the 16S rRNA that are involved in tRNA selection in the A site and with the mRNA backbone. Located at the interface of the 30S and 50S subunits, it traverses the body of the 30S subunit contacting proteins on the other side and probably holding the rRNA structure together. The combined cluster of proteins S8, S12 and S17 appears to hold together the shoulder and platform of the 30S subunit. This is Small ribosomal subunit protein uS12 from Neorickettsia sennetsu (strain ATCC VR-367 / Miyayama) (Ehrlichia sennetsu).